The sequence spans 307 residues: D-alanine--D-alanine ligase (307 aa).

The region spanning 101 to 301 (KTVMRAAGVD…FGELVRWMVE (201 aa)) is the ATP-grasp domain. Position 127–182 (127–182 (PLPPPYVVKPIAEGSSVGVIIVRDGRSHPPQILASEEWTFGEQVLAEPYIAGRELT)) interacts with ATP. 3 residues coordinate Mg(2+): aspartate 251, glutamate 268, and asparagine 270.

Belongs to the D-alanine--D-alanine ligase family. Mg(2+) is required as a cofactor. It depends on Mn(2+) as a cofactor.

It is found in the cytoplasm. It carries out the reaction 2 D-alanine + ATP = D-alanyl-D-alanine + ADP + phosphate + H(+). It functions in the pathway cell wall biogenesis; peptidoglycan biosynthesis. Its function is as follows. Cell wall formation. In Methylobacterium radiotolerans (strain ATCC 27329 / DSM 1819 / JCM 2831 / NBRC 15690 / NCIMB 10815 / 0-1), this protein is D-alanine--D-alanine ligase.